A 75-amino-acid chain; its full sequence is Large ribosomal subunit protein bL31 (75 aa).

As to quaternary structure, part of the 50S ribosomal subunit.

Functionally, binds the 23S rRNA. This Rhodopseudomonas palustris (strain ATCC BAA-98 / CGA009) protein is Large ribosomal subunit protein bL31.